The chain runs to 306 residues: Anamorsin homolog (306 aa).

Positions 1 to 25 are enriched in basic and acidic residues; sequence MVPPREDVTVRIVCERRRTAGKEAR. Residues 1–51 are disordered; sequence MVPPREDVTVRIVCERRRTAGKEARPPPSAKPTPGNTSSHPNAKETHRSNE. Positions 59–190 are N-terminal SAM-like domain; that stretch reads KQSHRRSIMA…RRNNTTNSVA (132 aa). Residues 191-218 are linker; that stretch reads TLNFASNNNNGNDLLIDEDNLLTDASNL. C236, C242, C245, and C247 together coordinate [2Fe-2S] cluster. Residues 236-247 are fe-S binding site A; it reads CSGRAPCDDCTC. The span at 252 to 265 shows a compositional bias: basic and acidic residues; that stretch reads GAKEGNSEQPKEIK. The segment at 252-272 is disordered; that stretch reads GAKEGNSEQPKEIKSSSCGKC. Residues C269, C272, C280, and C283 each contribute to the [4Fe-4S] cluster site. 2 consecutive short sequence motifs (cx2C motif) follow at residues 269 to 272 and 280 to 283; these read CGKC and CASC. Residues 269 to 283 are fe-S binding site B; it reads CGKCSLGDAFRCASC.

Belongs to the anamorsin family. In terms of assembly, monomer. It depends on [2Fe-2S] cluster as a cofactor. [4Fe-4S] cluster serves as cofactor.

It is found in the cytoplasm. It localises to the mitochondrion intermembrane space. Component of the cytosolic iron-sulfur (Fe-S) protein assembly (CIA) machinery. Required for the maturation of extramitochondrial Fe-S proteins. Part of an electron transfer chain functioning in an early step of cytosolic Fe-S biogenesis, facilitating the de novo assembly of a [4Fe-4S] cluster on the cytosolic Fe-S scaffold complex. Electrons are transferred from NADPH via a FAD- and FMN-containing diflavin oxidoreductase. Together with the diflavin oxidoreductase, also required for the assembly of the diferric tyrosyl radical cofactor of ribonucleotide reductase (RNR), probably by providing electrons for reduction during radical cofactor maturation in the catalytic small subunit. The chain is Anamorsin homolog from Phaeodactylum tricornutum (strain CCAP 1055/1).